A 424-amino-acid polypeptide reads, in one-letter code: MHDLSHFRNNFEKLAERLATRGGAINLDGFRDLDLKRRSAISQAEQLKARKNQESLEIGKLKREGADTAERQKEVRAIADQIVALDEQVKTVDEEFQKLLSGIPNIPHESVPVGKSADDNVEVRRSGEPAKFDFEPKAHWDLGPELGILDFERAVKITGARFALYWGAGARLERALVNFFLDVHTQQHGYTEVLPPFMVNSASLYGTGQLPKFAEDLFKIENSDFWLIPTAEVPVTNIYRDETLEGEQLPVKLCAYTPCFRSEAGSYGRDVRGIIRQHQFQKVELVKFTRPEQSYDELDKLTADAEDILVRLGLPFRTVVLCTGDMGPSSAKTYDIEVWLPGQNNYKEISSCSNFEAFQARRAGIRYRTGKKSEFAHTINGSGLAVGRTWVAIIENYQQMDGSVIIPEALRPYMNAEIIRPERP.

230–232 lines the L-serine pocket; it reads TAE. 261-263 is an ATP binding site; sequence RSE. Residue Glu-284 participates in L-serine binding. Position 348–351 (348–351) interacts with ATP; that stretch reads EISS. Ser-382 contacts L-serine.

Belongs to the class-II aminoacyl-tRNA synthetase family. Type-1 seryl-tRNA synthetase subfamily. Homodimer. The tRNA molecule binds across the dimer.

It is found in the cytoplasm. The catalysed reaction is tRNA(Ser) + L-serine + ATP = L-seryl-tRNA(Ser) + AMP + diphosphate + H(+). It carries out the reaction tRNA(Sec) + L-serine + ATP = L-seryl-tRNA(Sec) + AMP + diphosphate + H(+). It participates in aminoacyl-tRNA biosynthesis; selenocysteinyl-tRNA(Sec) biosynthesis; L-seryl-tRNA(Sec) from L-serine and tRNA(Sec): step 1/1. Catalyzes the attachment of serine to tRNA(Ser). Is also able to aminoacylate tRNA(Sec) with serine, to form the misacylated tRNA L-seryl-tRNA(Sec), which will be further converted into selenocysteinyl-tRNA(Sec). This Solibacter usitatus (strain Ellin6076) protein is Serine--tRNA ligase.